Here is a 109-residue protein sequence, read N- to C-terminus: Membrane-bound lysozyme inhibitor of C-type lysozyme (109 aa).

Positions 1-17 (MTMKKLLIIILPVLLSG) are cleaved as a signal peptide. Cys18 carries the N-palmitoyl cysteine lipid modification. Cys18 carries the S-diacylglycerol cysteine lipid modification. A disulfide bond links Cys37 and Cys102.

This sequence belongs to the MliC family. Type 1 subfamily. As to quaternary structure, monomer.

It is found in the cell outer membrane. Specifically inhibits C-type lysozymes. The polypeptide is Membrane-bound lysozyme inhibitor of C-type lysozyme (Escherichia coli (strain K12)).